The sequence spans 164 residues: Putative pre-16S rRNA nuclease (164 aa).

Belongs to the YqgF nuclease family.

It is found in the cytoplasm. Its function is as follows. Could be a nuclease involved in processing of the 5'-end of pre-16S rRNA. This Rhizobium johnstonii (strain DSM 114642 / LMG 32736 / 3841) (Rhizobium leguminosarum bv. viciae) protein is Putative pre-16S rRNA nuclease.